A 315-amino-acid polypeptide reads, in one-letter code: tRNA-dihydrouridine(16) synthase (315 aa).

Residues 7 to 9 (PME) and Gln68 each bind FMN. Residue Cys98 is the Proton donor of the active site. FMN contacts are provided by residues Lys139, 199–201 (NGE), and 223–224 (GR).

Belongs to the Dus family. DusC subfamily. The cofactor is FMN.

It carries out the reaction 5,6-dihydrouridine(16) in tRNA + NADP(+) = uridine(16) in tRNA + NADPH + H(+). It catalyses the reaction 5,6-dihydrouridine(16) in tRNA + NAD(+) = uridine(16) in tRNA + NADH + H(+). Functionally, catalyzes the synthesis of 5,6-dihydrouridine (D), a modified base found in the D-loop of most tRNAs, via the reduction of the C5-C6 double bond in target uridines. Specifically modifies U16 in tRNAs. The chain is tRNA-dihydrouridine(16) synthase from Aquipseudomonas alcaligenes (Pseudomonas alcaligenes).